A 334-amino-acid chain; its full sequence is tRNA uridine(34) hydroxylase (334 aa).

A Rhodanese domain is found at serine 123–serine 217. The active-site Cysteine persulfide intermediate is cysteine 177.

The protein belongs to the TrhO family.

The catalysed reaction is uridine(34) in tRNA + AH2 + O2 = 5-hydroxyuridine(34) in tRNA + A + H2O. In terms of biological role, catalyzes oxygen-dependent 5-hydroxyuridine (ho5U) modification at position 34 in tRNAs. This is tRNA uridine(34) hydroxylase from Shewanella baltica (strain OS185).